The chain runs to 407 residues: Putative replication protein A (407 aa).

This sequence belongs to the ParA family.

This Sinorhizobium fredii (strain NBRC 101917 / NGR234) protein is Putative replication protein A.